We begin with the raw amino-acid sequence, 501 residues long: 5-beta-cholestane-3-alpha,7-alpha-diol 12-alpha-hydroxylase (501 aa).

A helical membrane pass occupies residues 1 to 21 (MVLWGPVLGVLLVAIVGYLCL). A Phosphoserine modification is found at serine 326. Cysteine 440 provides a ligand contact to heme.

It belongs to the cytochrome P450 family. Heme serves as cofactor.

It is found in the endoplasmic reticulum membrane. It localises to the microsome membrane. The enzyme catalyses 7alpha-hydroxycholest-4-en-3-one + reduced [NADPH--hemoprotein reductase] + O2 = 7alpha,12alpha-dihydroxycholest-4-en-3-one + oxidized [NADPH--hemoprotein reductase] + H2O + H(+). The catalysed reaction is 5beta-cholestane-3alpha,7alpha-diol + reduced [NADPH--hemoprotein reductase] + O2 = 5beta-cholestane-3alpha,7alpha,12alpha-triol + oxidized [NADPH--hemoprotein reductase] + H2O + H(+). It carries out the reaction chenodeoxycholate + reduced [NADPH--hemoprotein reductase] + O2 = cholate + oxidized [NADPH--hemoprotein reductase] + H2O + H(+). The protein operates within lipid metabolism; bile acid biosynthesis. Its function is as follows. A cytochrome P450 monooxygenase involved in primary bile acid biosynthesis. Catalyzes the 12alpha-hydroxylation of 7alpha-hydroxy-4-cholesten-3-one, an intermediate metabolite in cholic acid biosynthesis. Controls biliary balance of cholic acid and chenodeoxycholic acid, ultimately regulating the intestinal absorption of dietary lipids. Mechanistically, uses molecular oxygen inserting one oxygen atom into a substrate, and reducing the second into a water molecule, with two electrons provided by NADPH via cytochrome P450 reductase (CPR; NADPH--hemoprotein reductase). This chain is 5-beta-cholestane-3-alpha,7-alpha-diol 12-alpha-hydroxylase (CYP8B1), found in Sus scrofa (Pig).